A 122-amino-acid polypeptide reads, in one-letter code: Replication factor A protein 3 (122 aa).

Belongs to the replication factor A protein 3 family. As to quaternary structure, component of the heterotrimeric canonical replication protein A complex (RPA). Post-translationally, the N-terminus is blocked.

The protein localises to the nucleus. Functionally, as part of the replication protein A (RPA/RP-A), a single-stranded DNA-binding heterotrimeric complex, may play an essential role in DNA replication, recombination and repair. Binds and stabilizes single-stranded DNA intermediates, preventing complementary DNA reannealing and recruiting different proteins involved in DNA metabolism. Stimulates the activity of a cognate strand exchange protein (SEP1). This chain is Replication factor A protein 3 (RFA3), found in Saccharomyces cerevisiae (strain ATCC 204508 / S288c) (Baker's yeast).